A 173-amino-acid polypeptide reads, in one-letter code: Acireductone dioxygenase 1 (173 aa).

Residues histidine 96, histidine 98, glutamate 102, and histidine 140 each contribute to the Fe(2+) site. The Ni(2+) site is built by histidine 96, histidine 98, glutamate 102, and histidine 140.

Belongs to the acireductone dioxygenase (ARD) family. In terms of assembly, monomer. It depends on Fe(2+) as a cofactor. Ni(2+) is required as a cofactor.

The catalysed reaction is 1,2-dihydroxy-5-(methylsulfanyl)pent-1-en-3-one + O2 = 3-(methylsulfanyl)propanoate + CO + formate + 2 H(+). The enzyme catalyses 1,2-dihydroxy-5-(methylsulfanyl)pent-1-en-3-one + O2 = 4-methylsulfanyl-2-oxobutanoate + formate + 2 H(+). It functions in the pathway amino-acid biosynthesis; L-methionine biosynthesis via salvage pathway; L-methionine from S-methyl-5-thio-alpha-D-ribose 1-phosphate: step 5/6. Functionally, catalyzes 2 different reactions between oxygen and the acireductone 1,2-dihydroxy-3-keto-5-methylthiopentene (DHK-MTPene) depending upon the metal bound in the active site. Fe-containing acireductone dioxygenase (Fe-ARD) produces formate and 2-keto-4-methylthiobutyrate (KMTB), the alpha-ketoacid precursor of methionine in the methionine recycle pathway. Ni-containing acireductone dioxygenase (Ni-ARD) produces methylthiopropionate, carbon monoxide and formate, and does not lie on the methionine recycle pathway. The protein is Acireductone dioxygenase 1 of Pectobacterium atrosepticum (strain SCRI 1043 / ATCC BAA-672) (Erwinia carotovora subsp. atroseptica).